An 801-amino-acid polypeptide reads, in one-letter code: Xaa-Pro dipeptidyl-peptidase (801 aa).

Active-site charge relay system residues include Ser-371, Asp-491, and His-522.

It belongs to the peptidase S15 family. In terms of assembly, homodimer.

It localises to the cytoplasm. It carries out the reaction Hydrolyzes Xaa-Pro-|- bonds to release unblocked, N-terminal dipeptides from substrates including Ala-Pro-|-p-nitroanilide and (sequentially) Tyr-Pro-|-Phe-Pro-|-Gly-Pro-|-Ile.. Removes N-terminal dipeptides sequentially from polypeptides having unsubstituted N-termini provided that the penultimate residue is proline. This chain is Xaa-Pro dipeptidyl-peptidase, found in Ligilactobacillus salivarius (strain UCC118) (Lactobacillus salivarius).